The sequence spans 446 residues: Coiled-coil domain-containing protein 112 (446 aa).

Coiled-coil stretches lie at residues 35 to 116 (KTER…RKID) and 219 to 400 (ERKK…NVSR). 2 disordered regions span residues 253–272 (FHNKQEDNQKQKEEQRKKQK) and 390–430 (LKEK…LLHI). Basic and acidic residues predominate over residues 255–268 (NKQEDNQKQKEEQR).

It localises to the cytoplasm. It is found in the cytoskeleton. The protein localises to the microtubule organizing center. The protein resides in the centrosome. Its subcellular location is the centriolar satellite. The polypeptide is Coiled-coil domain-containing protein 112 (CCDC112) (Homo sapiens (Human)).